Here is a 351-residue protein sequence, read N- to C-terminus: uncharacterized protein (351 aa).

A disordered region spans residues 1-61 (MNDKRKPSFQ…RDKQEVKETR (61 aa)). Basic and acidic residues-rich tracts occupy residues 16 to 38 (FQER…HFND) and 44 to 61 (RNEK…KETR).

This sequence belongs to the class IV-like SAM-binding methyltransferase superfamily. RNA methyltransferase TrmH family.

This is an uncharacterized protein from Haemophilus influenzae (strain ATCC 51907 / DSM 11121 / KW20 / Rd).